A 230-amino-acid chain; its full sequence is MSDLILQASNLEKEYRDGKLKTPVIKGLDFELRANEKVAIVGSSGSGKSTLLHLLAGLDKPTGGTVSLMSQAFSGLNEVKRGRLRNQYMGFVYQFHFLLPELNALENVMLPLRVRRTPSKDAEKQASALLDRVGLGHRIHHKPSELSGGERQRVAIARALITKPACVLADEPTGNLDESSAQQVFDLMLELNQEQNTALLVVTHDLKLAAKMDRQYQLTEGHFILPSETL.

In terms of domain architecture, ABC transporter spans 6–230 (LQASNLEKEY…GHFILPSETL (225 aa)). An ATP-binding site is contributed by 42-49 (GSSGSGKS).

This sequence belongs to the ABC transporter superfamily. Lipoprotein translocase (TC 3.A.1.125) family. The complex is composed of two ATP-binding proteins (LolD) and two transmembrane proteins (LolC and LolE).

The protein resides in the cell inner membrane. Part of the ABC transporter complex LolCDE involved in the translocation of mature outer membrane-directed lipoproteins, from the inner membrane to the periplasmic chaperone, LolA. Responsible for the formation of the LolA-lipoprotein complex in an ATP-dependent manner. In Hydrogenovibrio crunogenus (strain DSM 25203 / XCL-2) (Thiomicrospira crunogena), this protein is Lipoprotein-releasing system ATP-binding protein LolD.